The primary structure comprises 850 residues: Protein monoglycylase TTLL8 (850 aa).

2 disordered regions span residues 1–29 (MEPE…QGIS) and 228–254 (RSSR…DAEN). The TTL domain maps to 222 to 580 (SHQSCSRSSR…DRSCDIGNFE (359 aa)). Residues Lys-354, 360-361 (RG), 392-395 (QKYI), 405-407 (KFD), and 449-450 (CN) contribute to the ATP site. Position 360 (Arg-360) interacts with a protein. The Mg(2+) site is built by Asp-527, Glu-540, and Asn-542. Position 540 (Glu-540) interacts with ATP. A disordered region spans residues 627 to 652 (AQPLKARGPSAMPDPAQGPPSPALQR).

Mg(2+) serves as cofactor.

It is found in the cytoplasm. The protein resides in the cytoskeleton. It localises to the cell projection. The protein localises to the cilium. Its subcellular location is the cilium axoneme. It is found in the flagellum axoneme. The enzyme catalyses L-glutamyl-[protein] + glycine + ATP = glycyl-L-glutamyl-[protein] + ADP + phosphate + H(+). In terms of biological role, monoglycylase which modifies both tubulin and non-tubulin proteins, adding a single glycine to the gamma-carboxyl groups of specific glutamate residues to generate monoglycine side chains within the C-terminal tail of target proteins. Not involved in elongation step of the polyglycylation reaction. Preferentially monoglycylates alpha-tubulin over beta-tubulin. Together with TTLL3, mediates microtubule glycylation of primary and motile cilia, which is essential for their stability and maintenance. Together with TTLL3, glycylates sperm flagella which regulates axonemal dynein motor activity, thereby controlling flagellar beat, directional sperm swimming and male fertility. Monoglycylates non-tubulin proteins such as ANP32A, ANP32B, SET, NCL and NAP1. The polypeptide is Protein monoglycylase TTLL8 (Homo sapiens (Human)).